We begin with the raw amino-acid sequence, 297 residues long: Acetyl-coenzyme A carboxylase carboxyl transferase subunit beta (297 aa).

Residues 25 to 294 enclose the CoA carboxyltransferase N-terminal domain; sequence LWVKCPETGQ…LPPKGRLPRP (270 aa).

Belongs to the AccD/PCCB family. Acetyl-CoA carboxylase is a heterohexamer composed of biotin carboxyl carrier protein (AccB), biotin carboxylase (AccC) and two subunits each of ACCase subunit alpha (AccA) and ACCase subunit beta (AccD).

It is found in the cytoplasm. The enzyme catalyses N(6)-carboxybiotinyl-L-lysyl-[protein] + acetyl-CoA = N(6)-biotinyl-L-lysyl-[protein] + malonyl-CoA. Its pathway is lipid metabolism; malonyl-CoA biosynthesis; malonyl-CoA from acetyl-CoA: step 1/1. Its function is as follows. Component of the acetyl coenzyme A carboxylase (ACC) complex. Biotin carboxylase (BC) catalyzes the carboxylation of biotin on its carrier protein (BCCP) and then the CO(2) group is transferred by the transcarboxylase to acetyl-CoA to form malonyl-CoA. This Xanthobacter autotrophicus (strain ATCC BAA-1158 / Py2) protein is Acetyl-coenzyme A carboxylase carboxyl transferase subunit beta.